We begin with the raw amino-acid sequence, 216 residues long: Small ribosomal subunit protein uS2 (216 aa).

The protein belongs to the universal ribosomal protein uS2 family.

The chain is Small ribosomal subunit protein uS2 from Carsonella ruddii (strain PV).